We begin with the raw amino-acid sequence, 179 residues long: ATP synthase subunit delta (179 aa).

It belongs to the ATPase delta chain family. In terms of assembly, F-type ATPases have 2 components, F(1) - the catalytic core - and F(0) - the membrane proton channel. F(1) has five subunits: alpha(3), beta(3), gamma(1), delta(1), epsilon(1). F(0) has three main subunits: a(1), b(2) and c(10-14). The alpha and beta chains form an alternating ring which encloses part of the gamma chain. F(1) is attached to F(0) by a central stalk formed by the gamma and epsilon chains, while a peripheral stalk is formed by the delta and b chains.

It localises to the cell membrane. Functionally, f(1)F(0) ATP synthase produces ATP from ADP in the presence of a proton or sodium gradient. F-type ATPases consist of two structural domains, F(1) containing the extramembraneous catalytic core and F(0) containing the membrane proton channel, linked together by a central stalk and a peripheral stalk. During catalysis, ATP synthesis in the catalytic domain of F(1) is coupled via a rotary mechanism of the central stalk subunits to proton translocation. This protein is part of the stalk that links CF(0) to CF(1). It either transmits conformational changes from CF(0) to CF(1) or is implicated in proton conduction. This chain is ATP synthase subunit delta, found in Listeria monocytogenes serotype 4b (strain CLIP80459).